A 135-amino-acid chain; its full sequence is MGYRKLGRTSSQRKALLRDLATDLIVFERIETTEARAKEIRKVVEKLITSGKKGDLHARRQAAAFVRHEVVEVVQVDAKGKDGSTVKKNRPVYALQKLFDDVAPRYAERQGGYTRILKKGPRRGDGAPMVIIELV.

The protein belongs to the bacterial ribosomal protein bL17 family. Part of the 50S ribosomal subunit. Contacts protein L32.

The chain is Large ribosomal subunit protein bL17 from Listeria welshimeri serovar 6b (strain ATCC 35897 / DSM 20650 / CCUG 15529 / CIP 8149 / NCTC 11857 / SLCC 5334 / V8).